Reading from the N-terminus, the 350-residue chain is Phosphoribosylformylglycinamidine cyclo-ligase (350 aa).

Belongs to the AIR synthase family.

Its subcellular location is the cytoplasm. It carries out the reaction 2-formamido-N(1)-(5-O-phospho-beta-D-ribosyl)acetamidine + ATP = 5-amino-1-(5-phospho-beta-D-ribosyl)imidazole + ADP + phosphate + H(+). The protein operates within purine metabolism; IMP biosynthesis via de novo pathway; 5-amino-1-(5-phospho-D-ribosyl)imidazole from N(2)-formyl-N(1)-(5-phospho-D-ribosyl)glycinamide: step 2/2. This Nitratidesulfovibrio vulgaris (strain DSM 19637 / Miyazaki F) (Desulfovibrio vulgaris) protein is Phosphoribosylformylglycinamidine cyclo-ligase.